The primary structure comprises 723 residues: DNA-binding protein RFX2 (723 aa).

Residues 1–46 (MQNSEGGADSPASVALRPSAAAPPVPASPQRVLVQAASSAPKGAQM) are disordered. Residues 10–20 (SPASVALRPSA) are compositionally biased toward low complexity. Position 28 is a phosphoserine (Ser-28). Residues 199 to 274 (HLQWLLDNYE…YHYYGIRLKP (76 aa)) constitute a DNA-binding region (RFX-type winged-helix). The tract at residues 292-332 (QQPMHQKPRYRPAQKTDSLGDSGSHSSLHSTPEQTMAAQSQ) is disordered. Low complexity predominate over residues 307–322 (TDSLGDSGSHSSLHST). Positions 323 to 332 (PEQTMAAQSQ) are enriched in polar residues. Ser-416 is modified (phosphoserine). The segment at 689–723 (GDERRGSEAGPDAHSLGEPLVKRERSDPNHSLQGI) is disordered.

The protein belongs to the RFX family. In terms of assembly, homodimer; probably only forms homodimers in testis. Heterodimer; heterodimerizes with RFX1 and RFX3.

Its subcellular location is the nucleus. It is found in the cytoplasm. Its function is as follows. Transcription factor that acts as a key regulator of spermatogenesis. Acts by regulating expression of genes required for the haploid phase during spermiogenesis, such as genes required for cilium assembly and function. Recognizes and binds the X-box, a regulatory motif with DNA sequence 5'-GTNRCC(0-3N)RGYAAC-3' present on promoters. Probably activates transcription of the testis-specific histone gene H1-6. This chain is DNA-binding protein RFX2 (RFX2), found in Macaca fascicularis (Crab-eating macaque).